Here is a 201-residue protein sequence, read N- to C-terminus: MALKDRFDKIISYFDTDDVSENEVHEVQERTSVQRDSRAATAQEASQRSHMTNSAEEEMIGSRPRTSTYDPNRQERQRVQRDNAYQQATPRVQNKDSVRQQREQVTIALKYPRKYEDAQEIVDLLIVNECVLIDFQYMLDAQARRCLDYIDGASRVLYGSLQKVGSSMFLLTPANVMVDIEEMNIPKTGQETSFDFDMKRR.

The span at V27–R38 shows a compositional bias: basic and acidic residues. The tract at residues V27 to R99 is disordered. Residues Q43–S54 are compositionally biased toward polar residues. A compositionally biased stretch (basic and acidic residues) spans N72–R81. Over residues N83 to V92 the composition is skewed to polar residues.

It belongs to the SepF family. Homodimer. Interacts with FtsZ.

It localises to the cytoplasm. Cell division protein that is part of the divisome complex and is recruited early to the Z-ring. Probably stimulates Z-ring formation, perhaps through the cross-linking of FtsZ protofilaments. Its function overlaps with FtsA. The sequence is that of Cell division protein SepF from Streptococcus agalactiae serotype Ia (strain ATCC 27591 / A909 / CDC SS700).